A 123-amino-acid chain; its full sequence is Small ribosomal subunit protein eS25 (123 aa).

Residues 1-13 (MPPKKDTKGDSKK) are compositionally biased toward basic and acidic residues. The segment at 1–34 (MPPKKDTKGDSKKGQKAKAGSGGGKAKKKKWSKG) is disordered. Residues 25–34 (KAKKKKWSKG) show a composition bias toward basic residues.

This sequence belongs to the eukaryotic ribosomal protein eS25 family.

This is Small ribosomal subunit protein eS25 (RPS25) from Branchiostoma belcheri (Amphioxus).